The sequence spans 200 residues: ASI1-immunoprecipitated protein 1 (200 aa).

Positions 18–101 (RTVYVDELTP…RPVRACAAEP (84 aa)) constitute an RRM domain.

Component of the ASI1-AIPP1-EDM2 (AAE) RNA regulatory complex composed of at least AIPP1/EDM3, ASI1 and EDM2 and may contain CPL2, AIPP2 and AIPP3/BDT1. Binds directly to ASI1 and EDM2 and may function as a bridge protein between them. Co-associates with EDM2 to histone H3 lysine 9 dimethylation (H3K9me2)-marked chromatin and transcripts at a critical proximal polyadenylation site of RPP7 to hamper proximal transcript polyadeylation/termination.

Its subcellular location is the nucleus. In terms of biological role, prevents gene silencing by suppressing CHG methylation as well as histone H3 lysine 9 dimethylation (H3K9me2) status at target loci. Collaboratively with ASI1 and EDM2, the AAE complex regulates alternative RNA processing (e.g. alternative splicing) and epigenetic silencing (e.g. H3K9me2) of intronic heterochromatin-containing genes as well as genic heterochromatin-containing genes by promoting distal 3' polyadenylation, thus being required for the accumulation of their full-length transcripts. May also modulate transposable elements (TE) expression. Mediates RPP7-dependent race-specific disease resistance by promoting histone H3 lysine 9 dimethylation (H3K9me2) at the proximal RPP7 polyadenylation site, thus controlling alternative polyadenylation of RPP7 immune receptor transcripts and facilitating 2-phosphoserine RNAPII occupancy. In cv. Columbia, required for RPP7-dependent disease resistance against the Hyaloperonospora arabidopsidis isolate Hiks1. This chain is ASI1-immunoprecipitated protein 1, found in Arabidopsis thaliana (Mouse-ear cress).